Here is a 54-residue protein sequence, read N- to C-terminus: Toxin AnmTx Cj 1c-1 (54 aa).

Residues 1–7 form the signal peptide; that stretch reads MLNKRGV. Disulfide bonds link Cys9–Cys50, Cys11–Cys41, and Cys33–Cys51. Glu53 carries the post-translational modification Glutamic acid 1-amide.

The protein belongs to the sea anemone sodium channel inhibitory toxin family. Type I subfamily. In terms of processing, contains 3 disulfide bonds.

Its subcellular location is the secreted. The protein localises to the nematocyst. Its function is as follows. In vivo, induces marked paralysis on shrimps (C.multidentata) at 10-20 seconds after injection and a weak toxicity when injected into insect larvae (M.domestica). The chain is Toxin AnmTx Cj 1c-1 from Epiactis japonica (Sea anemone).